Consider the following 367-residue polypeptide: Probable glutamine synthetase (367 aa).

Residues 30–110 (IQATYVWIDG…VMCDTLDHQM (81 aa)) form the GS beta-grasp domain. The GS catalytic domain maps to 117 to 367 (HRQACAEIMH…TAMIAQSILF (251 aa)).

This sequence belongs to the glutamine synthetase family. In terms of assembly, homooctamer.

It is found in the cytoplasm. It catalyses the reaction L-glutamate + NH4(+) + ATP = L-glutamine + ADP + phosphate + H(+). The polypeptide is Probable glutamine synthetase (gln-2) (Caenorhabditis elegans).